Here is a 491-residue protein sequence, read N- to C-terminus: Glutamyl-tRNA(Gln) amidotransferase subunit A (491 aa).

Catalysis depends on charge relay system residues lysine 80 and serine 155. Serine 179 acts as the Acyl-ester intermediate in catalysis.

It belongs to the amidase family. GatA subfamily. As to quaternary structure, heterotrimer of A, B and C subunits.

It carries out the reaction L-glutamyl-tRNA(Gln) + L-glutamine + ATP + H2O = L-glutaminyl-tRNA(Gln) + L-glutamate + ADP + phosphate + H(+). Its function is as follows. Allows the formation of correctly charged Gln-tRNA(Gln) through the transamidation of misacylated Glu-tRNA(Gln) in organisms which lack glutaminyl-tRNA synthetase. The reaction takes place in the presence of glutamine and ATP through an activated gamma-phospho-Glu-tRNA(Gln). In Salinispora arenicola (strain CNS-205), this protein is Glutamyl-tRNA(Gln) amidotransferase subunit A.